A 341-amino-acid polypeptide reads, in one-letter code: HTH-type transcriptional repressor PurR (341 aa).

The 55-residue stretch at 2-56 folds into the HTH lacI-type domain; that stretch reads ATIKDVAKRANVSTTTVSHVINKTRFVAEETRNAVWAAIKELHYSPSAVARSLKV. The segment at residues 4–23 is a DNA-binding region (H-T-H motif); that stretch reads IKDVAKRANVSTTTVSHVIN. The DNA-binding element occupies 48–56; that stretch reads SAVARSLKV. 5 residues coordinate hypoxanthine: Tyr-73, Arg-190, Thr-192, Phe-221, and Asp-275.

As to quaternary structure, homodimer.

It functions in the pathway purine metabolism; purine nucleotide biosynthesis [regulation]. Its function is as follows. Is the main repressor of the genes involved in the de novo synthesis of purine nucleotides, regulating purB, purC, purEK, purF, purHD, purL, purMN and guaBA expression. In addition, it participates in the regulation or coregulation of genes involved in de novo pyrimidine nucleotide biosynthesis, salvage and uptake (pyrC, pyrD, carAB and codBA), and of several genes encoding enzymes necessary for nucleotide and polyamine biosynthesis (prsA, glyA, gcvTHP, speA, glnB). Binds to a 16-bp palindromic sequence located within the promoter region of pur regulon genes. The consensus binding sequence is 5'-ACGCAAACGTTTTCNT-3'. PurR is allosterically activated to bind its cognate DNA by binding the purine corepressors, hypoxanthine or guanine, thereby effecting transcription repression. This chain is HTH-type transcriptional repressor PurR (purR), found in Escherichia coli (strain K12).